Here is a 222-residue protein sequence, read N- to C-terminus: GTP-binding nuclear protein Ran-4 (222 aa).

Residues 10 to 174 (DLPTFKLLIV…LYLARRIAGD (165 aa)) enclose the Small GTPase Ran-type domain. 21-28 (DGGTGKTT) is a binding site for GTP. Residues 40-48 (HNTEPTLGV) are switch-I. GTP-binding positions include G71, 125 to 128 (NKVD), and 153 to 155 (SAK). The tract at residues 71-87 (GQEKYSGLKDAYYIHGQ) is switch-II.

This sequence belongs to the small GTPase superfamily. Ran family. In terms of assembly, found in a nuclear export complex with RanGTP, exportin and pre-miRNA.

The protein resides in the nucleus. GTP-binding protein involved in nucleocytoplasmic transport. Required for the import of protein into the nucleus and also for RNA export. Involved in chromatin condensation and control of cell cycle. The protein is GTP-binding nuclear protein Ran-4 (RAN4) of Arabidopsis thaliana (Mouse-ear cress).